Consider the following 109-residue polypeptide: Ribonuclease P protein component (109 aa).

Belongs to the RnpA family. As to quaternary structure, consists of a catalytic RNA component (M1 or rnpB) and a protein subunit.

The enzyme catalyses Endonucleolytic cleavage of RNA, removing 5'-extranucleotides from tRNA precursor.. Functionally, RNaseP catalyzes the removal of the 5'-leader sequence from pre-tRNA to produce the mature 5'-terminus. It can also cleave other RNA substrates such as 4.5S RNA. The protein component plays an auxiliary but essential role in vivo by binding to the 5'-leader sequence and broadening the substrate specificity of the ribozyme. The polypeptide is Ribonuclease P protein component (Mycoplasma capricolum subsp. capricolum (strain California kid / ATCC 27343 / NCTC 10154)).